A 137-amino-acid chain; its full sequence is uncharacterized protein (137 aa).

The next 2 membrane-spanning stretches (helical) occupy residues 26–42 (CSLC…FFAM) and 52–69 (ASIP…GSIL).

The protein resides in the membrane. This is an uncharacterized protein from Saccharomyces cerevisiae (strain ATCC 204508 / S288c) (Baker's yeast).